The sequence spans 492 residues: Probable cytochrome P450 516B1 (492 aa).

A helical membrane pass occupies residues 1 to 17; the sequence is MYLILSLIIFLAYVAFH. Cys-438 lines the heme pocket.

It belongs to the cytochrome P450 family. Heme is required as a cofactor.

Its subcellular location is the membrane. This chain is Probable cytochrome P450 516B1 (cyp516B1), found in Dictyostelium discoideum (Social amoeba).